A 1923-amino-acid chain; its full sequence is Endoribonuclease Dicer (1923 aa).

The Helicase ATP-binding domain maps to 51–227 (LLEAALDHNT…ELEEKIQKLE (177 aa)). 64–71 (LNTGSGKT) contacts ATP. The short motif at 175 to 178 (DECH) is the DECH box element. Residues 256-595 (DCGPFTDRSG…LRNKCSKSVD (340 aa)) form a required for interaction with PRKRA and TARBP2 region. A disordered region spans residues 410 to 433 (VSWSDSEDDEEDEEIEEKEKPETN). A phosphoserine mark is found at S413 and S415. Acidic residues predominate over residues 414-425 (DSEDDEEDEEIE). Residues 433–602 (NFPSPFTNIL…SVDTGEADTE (170 aa)) form the Helicase C-terminal domain. The region spanning 629 to 721 (AIGHVNRYCA…MPVGKETVKY (93 aa)) is the Dicer dsRNA-binding fold domain. The region spanning 894 to 1041 (KFMEDIEKSE…LVPELCAIHP (148 aa)) is the PAZ domain. Phosphoserine occurs at positions 1015 and 1160. Polar residues-rich tracts occupy residues 1246-1255 (NANTSTSDGS) and 1277-1290 (SEQSPSPGYSSRTL). The segment at 1246–1291 (NANTSTSDGSPVTAAVPGTTETGEAPPDRTASEQSPSPGYSSRTLG) is disordered. The region spanning 1276–1404 (ASEQSPSPGY…TEKWEKDEMT (129 aa)) is the RNase III 1 domain. Mg(2+)-binding residues include E1316, E1396, and E1399. 3 positions are modified to phosphoserine: S1461, S1469, and S1471. The region spanning 1667-1825 (FENFEKKINY…LAGAIYMDSG (159 aa)) is the RNase III 2 domain. Mg(2+) contacts are provided by E1706, D1811, and E1814. In terms of domain architecture, DRBM spans 1853–1915 (SPVRELLEME…ARRALRSLKA (63 aa)). Residue S1869 is modified to Phosphoserine.

This sequence belongs to the helicase family. Dicer subfamily. As to quaternary structure, component of the RISC loading complex (RLC), or micro-RNA (miRNA) loading complex (miRLC), which is composed of DICER1, AGO2 and TARBP2; DICER1 and TARBP2 are required to process precursor miRNAs (pre-miRNAs) to mature miRNAs and then load them onto AGO2. Note that the trimeric RLC/miRLC is also referred to as RISC. Interacts with DHX9, AGO1, PIWIL1 and PRKRA. Interacts with AGO2, TARBP2, EIF6, MOV10 and RPL7A (60S ribosome subunit); they form a large RNA-induced silencing complex (RISC). Interacts with BCDIN3D. Interacts (via Dicer dsRNA-binding fold domain) with ALOX5 (via PLAT domain); this interaction enhances arachidonate 5-lipoxygenase activity and modifies the miRNA precursor processing activity of DICER1. The cofactor is Mg(2+). Requires Mn(2+) as cofactor.

Its subcellular location is the cytoplasm. It carries out the reaction Endonucleolytic cleavage to 5'-phosphomonoester.. Functionally, double-stranded RNA (dsRNA) endoribonuclease playing a central role in short dsRNA-mediated post-transcriptional gene silencing. Cleaves naturally occurring long dsRNAs and short hairpin pre-microRNAs (miRNA) into fragments of twenty-one to twenty-three nucleotides with 3' overhang of two nucleotides, producing respectively short interfering RNAs (siRNA) and mature microRNAs. SiRNAs and miRNAs serve as guide to direct the RNA-induced silencing complex (RISC) to complementary RNAs to degrade them or prevent their translation. Gene silencing mediated by siRNAs, also called RNA interference, controls the elimination of transcripts from mobile and repetitive DNA elements of the genome but also the degradation of exogenous RNA of viral origin for instance. The miRNA pathway on the other side is a mean to specifically regulate the expression of target genes. This Bos taurus (Bovine) protein is Endoribonuclease Dicer (DICER1).